A 142-amino-acid chain; its full sequence is Transcriptional regulator MraZ (142 aa).

SpoVT-AbrB domains are found at residues 5-51 (ASSL…PRNE) and 77-120 (AMDV…DAAT).

It belongs to the MraZ family. In terms of assembly, forms oligomers.

It localises to the cytoplasm. Its subcellular location is the nucleoid. This Polaromonas sp. (strain JS666 / ATCC BAA-500) protein is Transcriptional regulator MraZ.